Consider the following 179-residue polypeptide: Large ribosomal subunit protein uL5 (179 aa).

Belongs to the universal ribosomal protein uL5 family. Part of the 50S ribosomal subunit; part of the 5S rRNA/L5/L18/L25 subcomplex. Contacts the 5S rRNA and the P site tRNA. Forms a bridge to the 30S subunit in the 70S ribosome.

In terms of biological role, this is one of the proteins that bind and probably mediate the attachment of the 5S RNA into the large ribosomal subunit, where it forms part of the central protuberance. In the 70S ribosome it contacts protein S13 of the 30S subunit (bridge B1b), connecting the 2 subunits; this bridge is implicated in subunit movement. Contacts the P site tRNA; the 5S rRNA and some of its associated proteins might help stabilize positioning of ribosome-bound tRNAs. The chain is Large ribosomal subunit protein uL5 from Listeria innocua serovar 6a (strain ATCC BAA-680 / CLIP 11262).